Reading from the N-terminus, the 69-residue chain is Conotoxin Eb6.19 (69 aa).

An N-terminal signal peptide occupies residues 1 to 17; the sequence is VLIIAVLFLTACQLTTA. The propeptide occupies 18-41; the sequence is ETYSRGRQKHRARRSTDKNSKWTR. Intrachain disulfides connect C43/C57, C50/C61, and C56/C68.

This sequence belongs to the conotoxin O1 superfamily. As to expression, expressed by the venom duct.

The protein localises to the secreted. This is Conotoxin Eb6.19 (E1) from Conus ebraeus (Hebrew cone).